The sequence spans 1315 residues: Serine/threonine-protein kinase 36 (1315 aa).

Residues 4–254 (YHVLEMIGEG…WPDLLYHPFI (251 aa)) form the Protein kinase domain. ATP is bound by residues 10–18 (IGEGSFGRV) and K33. Catalysis depends on D125, which acts as the Proton acceptor. Disordered stretches follow at residues 312 to 345 (EAMQKKHQNTGPALEQEDKTSKVAPGTAPLPRLG) and 365 to 405 (SWAE…RSTD). Positions 379–397 (RENRTTPDCERAFPEERPE) are enriched in basic and acidic residues.

Belongs to the protein kinase superfamily. Ser/Thr protein kinase family. In terms of assembly, interacts with SPAG16 and KIF27. It depends on Mg(2+) as a cofactor.

Its subcellular location is the cytoplasm. It is found in the nucleus. The protein resides in the cytoskeleton. It localises to the cilium axoneme. It catalyses the reaction L-seryl-[protein] + ATP = O-phospho-L-seryl-[protein] + ADP + H(+). The catalysed reaction is L-threonyl-[protein] + ATP = O-phospho-L-threonyl-[protein] + ADP + H(+). Functionally, serine/threonine protein kinase which plays an important role in the sonic hedgehog (Shh) pathway by regulating the activity of GLI transcription factors. Controls the activity of the transcriptional regulators GLI1, GLI2 and GLI3 by opposing the effect of SUFU and promoting their nuclear localization. GLI2 requires an additional function of STK36 to become transcriptionally active, but the enzyme does not need to possess an active kinase catalytic site for this to occur. Required for postnatal development, possibly by regulating the homeostasis of cerebral spinal fluid or ciliary function. Essential for construction of the central pair apparatus of motile cilia. The chain is Serine/threonine-protein kinase 36 from Pongo abelii (Sumatran orangutan).